The primary structure comprises 287 residues: Shikimate dehydrogenase (NADP(+)) (287 aa).

Residues 21-23 and Thr-68 each bind shikimate; that span reads SKS. Lys-72 (proton acceptor) is an active-site residue. Shikimate is bound by residues Asn-93 and Asp-109. Residues 133 to 137, 157 to 162, and Met-226 each bind NADP(+); these read GAGGA and NRTQTK. Tyr-228 is a binding site for shikimate. Gly-250 is an NADP(+) binding site.

Belongs to the shikimate dehydrogenase family. Homodimer.

It carries out the reaction shikimate + NADP(+) = 3-dehydroshikimate + NADPH + H(+). The protein operates within metabolic intermediate biosynthesis; chorismate biosynthesis; chorismate from D-erythrose 4-phosphate and phosphoenolpyruvate: step 4/7. In terms of biological role, involved in the biosynthesis of the chorismate, which leads to the biosynthesis of aromatic amino acids. Catalyzes the reversible NADPH linked reduction of 3-dehydroshikimate (DHSA) to yield shikimate (SA). This is Shikimate dehydrogenase (NADP(+)) from Shewanella oneidensis (strain ATCC 700550 / JCM 31522 / CIP 106686 / LMG 19005 / NCIMB 14063 / MR-1).